The chain runs to 314 residues: Ribosomal protein L11 methyltransferase (314 aa).

S-adenosyl-L-methionine-binding residues include threonine 161, glycine 182, aspartate 204, and asparagine 248.

This sequence belongs to the methyltransferase superfamily. PrmA family.

The protein resides in the cytoplasm. It catalyses the reaction L-lysyl-[protein] + 3 S-adenosyl-L-methionine = N(6),N(6),N(6)-trimethyl-L-lysyl-[protein] + 3 S-adenosyl-L-homocysteine + 3 H(+). Methylates ribosomal protein L11. The sequence is that of Ribosomal protein L11 methyltransferase from Listeria innocua serovar 6a (strain ATCC BAA-680 / CLIP 11262).